We begin with the raw amino-acid sequence, 186 residues long: Secreted chorismate mutase (186 aa).

An N-terminal signal peptide occupies residues 1 to 30 (MQPTHTLTRLTVIGKLIIASSFFLSLAVQA). A Chorismate mutase domain is found at 31 to 107 (QQCGQTAPLI…AAKAIQYRYR (77 aa)). Cysteines 33 and 148 form a disulfide. Residues Arg-43, Lys-54, Asp-63, 99 to 103 (AKAIQ), and Arg-127 contribute to the substrate site.

As to quaternary structure, homodimer.

Its subcellular location is the periplasm. The enzyme catalyses chorismate = prephenate. Its pathway is metabolic intermediate biosynthesis; prephenate biosynthesis; prephenate from chorismate: step 1/1. Its function is as follows. Catalyzes the Claisen rearrangement of chorismate to prephenate. May play some role in the pathogenicity. The polypeptide is Secreted chorismate mutase (pheA2) (Yersinia pestis).